Here is a 261-residue protein sequence, read N- to C-terminus: 5'-nucleotidase SurE (261 aa).

Aspartate 8, aspartate 9, serine 43, and asparagine 96 together coordinate a divalent metal cation.

This sequence belongs to the SurE nucleotidase family. The cofactor is a divalent metal cation.

Its subcellular location is the cytoplasm. The catalysed reaction is a ribonucleoside 5'-phosphate + H2O = a ribonucleoside + phosphate. Functionally, nucleotidase that shows phosphatase activity on nucleoside 5'-monophosphates. The chain is 5'-nucleotidase SurE from Cereibacter sphaeroides (strain ATCC 17029 / ATH 2.4.9) (Rhodobacter sphaeroides).